We begin with the raw amino-acid sequence, 760 residues long: H(+)/Cl(-) exchange transporter 4 (760 aa).

Residues M1–A67 lie on the Cytoplasmic side of the membrane. A required for localization in the endoplasmic reticulum region spans residues M14–S63. A run of 2 helical transmembrane segments spans residues W68–S105 and L151–F174. The short motif at G180–P184 is the Selectivity filter part_1 element. Chloride is bound at residue S181. Residues I183 to L190 constitute an intramembrane region (helical). Helical transmembrane passes span G200 to G218 and E224 to S243. The Selectivity filter part_2 motif lies at G222 to P226. Intramembrane regions (helical) lie at residues V255–A267 and P271–L279. A run of 5 helical transmembrane segments spans residues L291–N309, F333–R358, L365–Y385, M442–M462, and G467–G486. The Selectivity filter part_3 motif lies at G467 to P471. F469 contacts chloride. 2 intramembrane regions (helical) span residues G514–V528 and T532–T543. Positions G544–E547 form an intramembrane region, note=Loop between two helices. The helical transmembrane segment at Y548–F566 threads the bilayer. Over G567–N760 the chain is Cytoplasmic. A chloride-binding site is contributed by Y572. Positions M600–E666 constitute a CBS 1 domain. Residues S610 and Y631–G633 each bind ATP. The required for localization in the endoplasmic reticulum stretch occupies residues G667–I696. The CBS 2 domain occupies L697–E755. T738–D741 is a binding site for ATP.

It belongs to the chloride channel (TC 2.A.49) family. ClC-4/CLCN4 subfamily. In terms of assembly, monomer. Forms heterodimers with CLCN3. In terms of tissue distribution, abundant in skeletal muscle and also detectable in brain and heart.

The protein resides in the early endosome membrane. Its subcellular location is the late endosome membrane. It is found in the endoplasmic reticulum membrane. It localises to the lysosome membrane. The protein localises to the recycling endosome membrane. Strongly outwardly rectifying, electrogenic H(+)/Cl(-)exchanger which mediates the exchange of chloride ions against protons. The CLC channel family contains both chloride channels and proton-coupled anion transporters that exchange chloride or another anion for protons. The presence of conserved gating glutamate residues is typical for family members that function as antiporters. The polypeptide is H(+)/Cl(-) exchange transporter 4 (CLCN4) (Homo sapiens (Human)).